The following is a 359-amino-acid chain: Peroxisome assembly protein 12 (359 aa).

Topologically, residues 1–24 (MSTTIRASQLASSISPKTEEKQPS) are peroxisomal matrix. The helical transmembrane segment at 25–52 (VFDIIAQENLATSIRPALQHLVKYLAFF) threads the bilayer. The Cytoplasmic portion of the chain corresponds to 53 to 56 (KPKT). Residues 57–81 (FLSVHRNFDEYYIIFDLILQNHYLR) traverse the membrane as a helical segment. Residues 82-106 (NYGASFTENFYSMKRIASGTGNPPN) lie on the Peroxisomal matrix side of the membrane. A helical transmembrane segment spans residues 107 to 128 (DGRERIMSLITLVGWPYVENKL). Over 129 to 133 (NQLYD) the chain is Cytoplasmic. A helical membrane pass occupies residues 134-184 (RLKEVYECRSWSSINGMKAKCQKMFVIIWPYIKTALKAVKSALQLAYILNR). Topologically, residues 185–253 (SSIHSPWLYF…ILGLPGIVSR (69 aa)) are peroxisomal matrix. A helical transmembrane segment spans residues 254 to 281 (LFAYGLFFVQFLDYMYNTDLAKLTKTGL). The Cytoplasmic portion of the chain corresponds to 282–359 (DGAIPSPPHK…NVQHLIRLFV (78 aa)). Residues cysteine 307, cysteine 310, cysteine 328, and cysteine 331 each contribute to the Zn(2+) site. The RING-type; degenerate zinc finger occupies 307-346 (CPICLKKRVNDTALFVSGYVFCYTCINQYVNTYNKCPVTG).

The protein belongs to the pex2/pex10/pex12 family. Component of the PEX2-PEX10-PEX12 retrotranslocation channel.

The protein resides in the peroxisome membrane. The protein operates within protein modification; protein ubiquitination. Component of a retrotranslocation channel required for peroxisome organization by mediating export of the PEX5/prx-5 receptor from peroxisomes to the cytosol, thereby promoting PEX5/prx-5 recycling. The retrotranslocation channel is composed of PEX2/prx-2, PEX10/prx-10 and PEX12/prx-12; each subunit contributing transmembrane segments that coassemble into an open channel that specifically allows the passage of PEX5/prx-5 through the peroxisomal membrane. PEX12/prx-12 also regulates PEX5/prx-5 recycling by activating the E3 ubiquitin-protein ligase activity of PEX10/prx-10. When PEX5 recycling is compromised, PEX12/prx-12 stimulates PEX10-mediated polyubiquitination of PEX5/prx-5, leading to its subsequent degradation. The polypeptide is Peroxisome assembly protein 12 (prx-12) (Caenorhabditis elegans).